The following is an 894-amino-acid chain: Valine--tRNA ligase (894 aa).

Positions 48–58 (PNVTGFLHMGH) match the 'HIGH' region motif. Residues 527–531 (KMSKS) carry the 'KMSKS' region motif. Lysine 530 contacts ATP. A coiled-coil region spans residues 827–852 (LVDFDEEVKRINKSIEKLTRDIGMLS).

Belongs to the class-I aminoacyl-tRNA synthetase family. ValS type 1 subfamily. Monomer.

Its subcellular location is the cytoplasm. The catalysed reaction is tRNA(Val) + L-valine + ATP = L-valyl-tRNA(Val) + AMP + diphosphate. Its function is as follows. Catalyzes the attachment of valine to tRNA(Val). As ValRS can inadvertently accommodate and process structurally similar amino acids such as threonine, to avoid such errors, it has a 'posttransfer' editing activity that hydrolyzes mischarged Thr-tRNA(Val) in a tRNA-dependent manner. The protein is Valine--tRNA ligase of Bdellovibrio bacteriovorus (strain ATCC 15356 / DSM 50701 / NCIMB 9529 / HD100).